Reading from the N-terminus, the 255-residue chain is HLA class II histocompatibility antigen, DQ alpha 2 chain (255 aa).

The first 23 residues, 1–23 (MILNKALLLGALALTAVMSPCGG), serve as a signal peptide directing secretion. The segment at 24 to 110 (EDIVADHVAS…RQSNSTAATN (87 aa)) is alpha-1. The Extracellular portion of the chain corresponds to 24 to 217 (EDIVADHVAS…IPAPMSELTE (194 aa)). 2 N-linked (GlcNAc...) asparagine glycosylation sites follow: asparagine 104 and asparagine 144. Positions 111–204 (EVPEVTVFSK…GLDEPLLKHW (94 aa)) are alpha-2. Residues 113 to 205 (PEVTVFSKFP…LDEPLLKHWE (93 aa)) form the Ig-like C1-type domain. A disulfide bond links cysteine 133 and cysteine 189. Positions 205-217 (EPEIPAPMSELTE) are connecting peptide. The helical transmembrane segment at 218-240 (TLVCALGLSVGLMGIVVGTVFII) threads the bilayer. The Cytoplasmic segment spans residues 241–255 (QGLRSVGASRHQGLL).

Belongs to the MHC class II family. Heterodimer of an alpha and a beta subunit; also referred as MHC class II molecule. Dimer formation with HLA-DQB2, but not with HLA-DQB1, is required for efficient exit from the endoplasmic reticulum (ER). In the ER, forms a heterononamer; 3 MHC class II molecules bind to a CD74 homotrimer (also known as invariant chain or HLA class II histocompatibility antigen gamma chain). In the endosomal/lysosomal system; CD74 undergoes sequential degradation by various proteases; leaving a small fragment termed CLIP on each MHC class II molecule. MHC class II molecule interacts with HLA_DM, and HLA_DO in B-cells, in order to release CLIP and facilitate the binding of antigenic peptides. Association with HLA-DMA also occurs in skin Langerhans cells, in post-Golgi compartments. Restricted to skin Langerhans cells, although some expression at low levels may occur at the surface of B lymphoblastoid cells.

Its subcellular location is the cell membrane. It localises to the endoplasmic reticulum membrane. It is found in the golgi apparatus. The protein localises to the trans-Golgi network membrane. The protein resides in the endosome membrane. Its subcellular location is the lysosome membrane. Its function is as follows. Binds peptides derived from antigens that access the endocytic route of antigen presenting cells (APC) and presents them on the cell surface for recognition by the CD4 T-cells. The peptide binding cleft accommodates peptides of 10-30 residues. The peptides presented by MHC class II molecules are generated mostly by degradation of proteins that access the endocytic route, where they are processed by lysosomal proteases and other hydrolases. Exogenous antigens that have been endocytosed by the APC are thus readily available for presentation via MHC II molecules, and for this reason this antigen presentation pathway is usually referred to as exogenous. As membrane proteins on their way to degradation in lysosomes as part of their normal turn-over are also contained in the endosomal/lysosomal compartments, exogenous antigens must compete with those derived from endogenous components. Autophagy is also a source of endogenous peptides, autophagosomes constitutively fuse with MHC class II loading compartments. In addition to APCs, other cells of the gastrointestinal tract, such as epithelial cells, express MHC class II molecules and CD74 and act as APCs, which is an unusual trait of the GI tract. To produce a MHC class II molecule that presents an antigen, three MHC class II molecules (heterodimers of an alpha and a beta chain) associate with a CD74 trimer in the ER to form a heterononamer. Soon after the entry of this complex into the endosomal/lysosomal system where antigen processing occurs, CD74 undergoes a sequential degradation by various proteases, including CTSS and CTSL, leaving a small fragment termed CLIP (class-II-associated invariant chain peptide). The removal of CLIP is facilitated by HLA-DM via direct binding to the alpha-beta-CLIP complex so that CLIP is released. HLA-DM stabilizes MHC class II molecules until primary high affinity antigenic peptides are bound. The MHC II molecule bound to a peptide is then transported to the cell membrane surface. In B-cells, the interaction between HLA-DM and MHC class II molecules is regulated by HLA-DO. Primary dendritic cells (DCs) also to express HLA-DO. Lysosomal microenvironment has been implicated in the regulation of antigen loading into MHC II molecules, increased acidification produces increased proteolysis and efficient peptide loading. This Homo sapiens (Human) protein is HLA class II histocompatibility antigen, DQ alpha 2 chain (HLA-DQA2).